The chain runs to 277 residues: Thymidylate synthase (277 aa).

R21 contributes to the dUMP binding site. H51 is a (6R)-5,10-methylene-5,6,7,8-tetrahydrofolate binding site. Residue 139–140 (RR) participates in dUMP binding. C159 serves as the catalytic Nucleophile. DUMP-binding positions include 179 to 182 (RSAD), N190, and 220 to 222 (HIY). (6R)-5,10-methylene-5,6,7,8-tetrahydrofolate is bound at residue D182. Residue A276 participates in (6R)-5,10-methylene-5,6,7,8-tetrahydrofolate binding.

The protein belongs to the thymidylate synthase family. Bacterial-type ThyA subfamily. In terms of assembly, homodimer.

Its subcellular location is the cytoplasm. The enzyme catalyses dUMP + (6R)-5,10-methylene-5,6,7,8-tetrahydrofolate = 7,8-dihydrofolate + dTMP. Its pathway is pyrimidine metabolism; dTTP biosynthesis. Its function is as follows. Catalyzes the reductive methylation of 2'-deoxyuridine-5'-monophosphate (dUMP) to 2'-deoxythymidine-5'-monophosphate (dTMP) while utilizing 5,10-methylenetetrahydrofolate (mTHF) as the methyl donor and reductant in the reaction, yielding dihydrofolate (DHF) as a by-product. This enzymatic reaction provides an intracellular de novo source of dTMP, an essential precursor for DNA biosynthesis. This Roseobacter denitrificans (strain ATCC 33942 / OCh 114) (Erythrobacter sp. (strain OCh 114)) protein is Thymidylate synthase.